We begin with the raw amino-acid sequence, 265 residues long: MKKEVCSVAFLKAVFAEFLATLIFVFFGLGSALKWPSALPTILQIALAFGLAIGTLAQALGPVSGGHINPAITLALLVGNQISLLRAFFYVAAQLVGAIAGAGILYGVAPLNARGNLAVNALNNNTTQGQAMVVELILTFQLALCIFASTDSRRTSPVGSPALSIGLSVTLGHLVGIYFTGCSMNPARSFGPAVVMNRFSPAHWVFWVGPIVGAVLAAILYFYLLFPNSLSLSERVAIIKGTYEPDEDWEEQREERKKTMELTTR.

Residues 1–12 (MKKEVCSVAFLK) lie on the Cytoplasmic side of the membrane. Residues 13-33 (AVFAEFLATLIFVFFGLGSAL) traverse the membrane as a helical segment. Residues 34-39 (KWPSAL) are Extracellular-facing. The helical transmembrane segment at 40–60 (PTILQIALAFGLAIGTLAQAL) threads the bilayer. The Cytoplasmic segment spans residues 61–65 (GPVSG). Positions 66–74 (GHINPAITL) form an intramembrane region, discontinuously helical. Residues 69 to 71 (NPA) carry the NPA 1 motif. Residues 75-87 (ALLVGNQISLLRA) are Cytoplasmic-facing. The chain crosses the membrane as a helical span at residues 88 to 108 (FFYVAAQLVGAIAGAGILYGV). Residues 109–126 (APLNARGNLAVNALNNNT) are Extracellular-facing. N-linked (GlcNAc...) asparagine glycosylation is found at Asn124 and Asn125. The helical transmembrane segment at 127 to 147 (TQGQAMVVELILTFQLALCIF) threads the bilayer. Topologically, residues 148–158 (ASTDSRRTSPV) are cytoplasmic. A helical membrane pass occupies residues 159–179 (GSPALSIGLSVTLGHLVGIYF). Position 180 (Thr180) is a topological domain, extracellular. Positions 181–191 (GCSMNPARSFG) form an intramembrane region, discontinuously helical. The short motif at 185-187 (NPA) is the NPA 2 element. Residues 192 to 203 (PAVVMNRFSPAH) are Extracellular-facing. Residues 204–224 (WVFWVGPIVGAVLAAILYFYL) form a helical membrane-spanning segment. The Cytoplasmic portion of the chain corresponds to 225–265 (LFPNSLSLSERVAIIKGTYEPDEDWEEQREERKKTMELTTR).

This sequence belongs to the MIP/aquaporin (TC 1.A.8) family. As to quaternary structure, homotetramer; each monomer provides an independent water pore. Interacts with TRPV4; the interaction is probably indirect and regulates TRPV4 activation by hypotonicity. As to expression, detected in skin eccrine sweat glands, at the apical cell membrane and at intercellular canaliculi (at protein level).

Its subcellular location is the apical cell membrane. It localises to the cell membrane. The protein localises to the cytoplasmic vesicle membrane. It carries out the reaction H2O(in) = H2O(out). Functionally, aquaporins form homotetrameric transmembrane channels, with each monomer independently mediating water transport across the plasma membrane along its osmotic gradient. Plays an important role in fluid secretion in salivary glands. Required for TRPV4 activation by hypotonicity. Together with TRPV4, controls regulatory volume decrease in salivary epithelial cells. Seems to play a redundant role in water transport in the eye, lung and in sweat glands. This is Aquaporin-5 from Homo sapiens (Human).